Here is a 375-residue protein sequence, read N- to C-terminus: 23S rRNA (uracil(747)-C(5))-methyltransferase RlmC (375 aa).

4 residues coordinate [4Fe-4S] cluster: Cys-3, Cys-11, Cys-14, and Cys-87. Residues Gln-212, Phe-241, Glu-262, and Asn-307 each contribute to the S-adenosyl-L-methionine site. The active-site Nucleophile is the Cys-334.

Belongs to the class I-like SAM-binding methyltransferase superfamily. RNA M5U methyltransferase family. RlmC subfamily.

It carries out the reaction uridine(747) in 23S rRNA + S-adenosyl-L-methionine = 5-methyluridine(747) in 23S rRNA + S-adenosyl-L-homocysteine + H(+). Catalyzes the formation of 5-methyl-uridine at position 747 (m5U747) in 23S rRNA. The chain is 23S rRNA (uracil(747)-C(5))-methyltransferase RlmC from Salmonella arizonae (strain ATCC BAA-731 / CDC346-86 / RSK2980).